The primary structure comprises 620 residues: 1-deoxy-D-xylulose-5-phosphate synthase (620 aa).

Residues His80 and 121–123 each bind thiamine diphosphate; that span reads GHS. Residue Asp152 participates in Mg(2+) binding. Thiamine diphosphate-binding positions include 153 to 154, Asn181, Tyr288, and Glu370; that span reads GA. Asn181 is a Mg(2+) binding site.

This sequence belongs to the transketolase family. DXPS subfamily. As to quaternary structure, homodimer. The cofactor is Mg(2+). Requires thiamine diphosphate as cofactor.

The enzyme catalyses D-glyceraldehyde 3-phosphate + pyruvate + H(+) = 1-deoxy-D-xylulose 5-phosphate + CO2. It functions in the pathway metabolic intermediate biosynthesis; 1-deoxy-D-xylulose 5-phosphate biosynthesis; 1-deoxy-D-xylulose 5-phosphate from D-glyceraldehyde 3-phosphate and pyruvate: step 1/1. Functionally, catalyzes the acyloin condensation reaction between C atoms 2 and 3 of pyruvate and glyceraldehyde 3-phosphate to yield 1-deoxy-D-xylulose-5-phosphate (DXP). The polypeptide is 1-deoxy-D-xylulose-5-phosphate synthase (Salmonella paratyphi A (strain ATCC 9150 / SARB42)).